We begin with the raw amino-acid sequence, 85 residues long: Putative membrane protein insertion efficiency factor (85 aa).

Belongs to the UPF0161 family.

Its subcellular location is the cell inner membrane. In terms of biological role, could be involved in insertion of integral membrane proteins into the membrane. This Fervidobacterium nodosum (strain ATCC 35602 / DSM 5306 / Rt17-B1) protein is Putative membrane protein insertion efficiency factor.